A 979-amino-acid polypeptide reads, in one-letter code: Mast/stem cell growth factor receptor Kit (979 aa).

The first 27 residues, 1-27 (MRGARGAWDFLCVLLLLLLLGVQTGSS), serve as a signal peptide directing secretion. Topologically, residues 28–527 (QPSVSPGEPS…QIHPHTLFTP (500 aa)) are extracellular. 5 consecutive Ig-like C2-type domains span residues 29-114 (PSVS…VFVR), 123-207 (DLPL…LKVR), 214-311 (PVVS…LEVV), 320-413 (PMMS…VYVN), and 416-510 (PEIL…FNFA). C60 and C99 are joined by a disulfide. N-linked (GlcNAc...) asparagine glycosylation is found at N96, N132, and N147. Cystine bridges form between C138-C188, C153-C185, and C235-C293. N286, N296, N303, N355, N370, N403, N466, and N489 each carry an N-linked (GlcNAc...) asparagine glycan. Cysteines 431 and 494 form a disulfide. Residues 528-548 (LLIGFVIAAGMMCIIVMILTY) form a helical membrane-spanning segment. Topologically, residues 549 to 979 (KYLQKPMYEV…TQPLLVHEDV (431 aa)) are cytoplasmic. Phosphotyrosine; by autocatalysis is present on residues Y550, Y556, Y571, and Y573. Y571 contributes to the Mg(2+) binding site. The segment at 571–573 (YVY) is important for interaction with phosphotyrosine-binding proteins. Residues 592–940 (LSFGKTLGAG…ISDSTNHIYS (349 aa)) enclose the Protein kinase domain. ATP contacts are provided by residues 599 to 606 (GAGAFGKV), K626, and 674 to 680 (EYCCYGD). Y706, Y724, and Y733 each carry phosphotyrosine; by autocatalysis. Residues S744 and S749 each carry the phosphoserine; by PKC/PRKCA modification. D795 functions as the Proton acceptor in the catalytic mechanism. R799 serves as a coordination point for ATP. Mg(2+) is bound by residues N800 and D813. A Phosphoserine modification is found at S824. The residue at position 826 (Y826) is a Phosphotyrosine; by autocatalysis. Phosphoserine is present on S894. Residues Y903 and Y939 each carry the phosphotyrosine; by autocatalysis modification. Residue S962 is modified to Phosphoserine.

It belongs to the protein kinase superfamily. Tyr protein kinase family. CSF-1/PDGF receptor subfamily. As to quaternary structure, monomer in the absence of bound KITLG/SCF. Homodimer in the presence of bound KITLG/SCF, forming a heterotetramer with two KITLG/SCF molecules. Interacts (via phosphorylated tyrosine residues) with the adapter proteins GRB2 and GRB7 (via SH2 domain), and SH2B2/APS. Interacts (via C-terminus) with MPDZ (via the tenth PDZ domain). Interacts (via phosphorylated tyrosine residues) with PIK3R1 and PIK3 catalytic subunit. Interacts (via phosphorylated tyrosine) with CRK (isoform Crk-II), FYN, SHC1 and MATK/CHK (via SH2 domain). Interacts with LYN and FES/FPS. Interacts (via phosphorylated tyrosine residues) with the protein phosphatases PTPN6/SHP-1 (via SH2 domain), PTPN11/SHP-2 (via SH2 domain) and PTPRU. Interacts with PLCG1. Interacts with DOK1 and TEC. Interacts with IL1RAP (independent of stimulation with KITLG/SCF). A mast cell-specific KITLG/SCF-induced interleukin-33 signaling complex contains IL1RL1, IL1RAP, KIT and MYD88. In terms of processing, ubiquitinated by SOCS6. KIT is rapidly ubiquitinated after autophosphorylation induced by KITLG/SCF binding, leading to internalization and degradation. Post-translationally, autophosphorylated on tyrosine residues. KITLG/SCF binding promotes autophosphorylation. Phosphorylated tyrosine residues are important for interaction with specific binding partners.

The protein resides in the cell membrane. It carries out the reaction L-tyrosyl-[protein] + ATP = O-phospho-L-tyrosyl-[protein] + ADP + H(+). With respect to regulation, present in an inactive conformation in the absence of bound ligand. KITLG/SCF binding leads to dimerization and activation by autophosphorylation on tyrosine residues. Activity is down-regulated by PRKCA-mediated phosphorylation on serine residues. Functionally, tyrosine-protein kinase that acts as a cell-surface receptor for the cytokine KITLG/SCF and plays an essential role in the regulation of cell survival and proliferation, hematopoiesis, stem cell maintenance, gametogenesis, mast cell development, migration and function, and in melanogenesis. In response to KITLG/SCF binding, KIT can activate several signaling pathways. Phosphorylates PIK3R1, PLCG1, SH2B2/APS and CBL. Activates the AKT1 signaling pathway by phosphorylation of PIK3R1, the regulatory subunit of phosphatidylinositol 3-kinase. Activated KIT also transmits signals via GRB2 and activation of RAS, RAF1 and the MAP kinases MAPK1/ERK2 and/or MAPK3/ERK1. Promotes activation of STAT family members STAT1, STAT3, STAT5A and STAT5B. Activation of PLCG1 leads to the production of the cellular signaling molecules diacylglycerol and inositol 1,4,5-trisphosphate. KIT signaling is modulated by protein phosphatases, and by rapid internalization and degradation of the receptor. Activated KIT promotes phosphorylation of the protein phosphatases PTPN6/SHP-1 and PTPRU, and of the transcription factors STAT1, STAT3, STAT5A and STAT5B. Promotes phosphorylation of PIK3R1, CBL, CRK (isoform Crk-II), LYN, MAPK1/ERK2 and/or MAPK3/ERK1, PLCG1, SRC and SHC1. This Canis lupus familiaris (Dog) protein is Mast/stem cell growth factor receptor Kit (KIT).